We begin with the raw amino-acid sequence, 178 residues long: Endothelin-2 (178 aa).

The N-terminal stretch at 1–26 (MVAMPTAWCSIALALLLALHEGKGQV) is a signal peptide. A propeptide spanning residues 27 to 46 (AAAPDQPAPSHRARASHLRP) is cleaved from the precursor. 2 cysteine pairs are disulfide-bonded: C49–C63 and C51–C59. The propeptide occupies 70–178 (VNTPGQTAPY…RPTHSRRWKR (109 aa)). The interval 96–111 (CECSSGRDPACATFCH) is endothelin-like.

This sequence belongs to the endothelin/sarafotoxin family.

It localises to the secreted. Functionally, endothelins are endothelium-derived vasoconstrictor peptides. In Felis catus (Cat), this protein is Endothelin-2 (EDN2).